Reading from the N-terminus, the 188-residue chain is uncharacterized protein (188 aa).

This is an uncharacterized protein from Methanocaldococcus jannaschii (strain ATCC 43067 / DSM 2661 / JAL-1 / JCM 10045 / NBRC 100440) (Methanococcus jannaschii).